Here is a 255-residue protein sequence, read N- to C-terminus: Probable transcriptional regulatory protein PCC7424_2775 (255 aa).

The protein belongs to the TACO1 family.

It is found in the cytoplasm. The chain is Probable transcriptional regulatory protein PCC7424_2775 from Gloeothece citriformis (strain PCC 7424) (Cyanothece sp. (strain PCC 7424)).